Reading from the N-terminus, the 85-residue chain is ATP synthase subunit 9, mitochondrial (85 aa).

A run of 2 helical transmembrane segments spans residues 19–39 (IGAG…GNVF) and 61–81 (ILGF…AFLI).

Belongs to the ATPase C chain family. As to quaternary structure, F-type ATPases have 2 components, CF(1) - the catalytic core - and CF(0) - the membrane proton channel. CF(1) has five subunits: alpha(3), beta(3), gamma(1), delta(1), epsilon(1). CF(0) has three main subunits: a, b and c.

The protein localises to the mitochondrion membrane. In terms of biological role, this protein is one of the chains of the nonenzymatic membrane component (F0) of mitochondrial ATPase. The protein is ATP synthase subunit 9, mitochondrial (ATP9) of Arabidopsis thaliana (Mouse-ear cress).